We begin with the raw amino-acid sequence, 217 residues long: MSLRSLFVAGLATLALAAPAPQIQARQGMSSNELESGPCRDVTFIFARGSTEQGNMGFIVGPGVCSSLKNDLGSDKVACQGVGGAYTAQLAPNFLSQNTDQASIDAATDMFDLANTKCPNTKIVAGGYSQGSAVIDNAIQALDSDLKAKVKGVVLFGFTRNVVDKGQIPGYPKDQTKIYCALGDLVCDNTLIITAAHLSYGADADDAAKFLASKVQG.

The first 17 residues, 1-17, serve as a signal peptide directing secretion; it reads MSLRSLFVAGLATLALA. 2 cysteine pairs are disulfide-bonded: C39–C118 and C65–C79. Catalysis depends on S129, which acts as the Nucleophile. C180 and C187 are joined by a disulfide. Residue D184 is part of the active site. Residue H197 is the Proton donor/acceptor of the active site.

The protein belongs to the cutinase family.

The protein resides in the secreted. It catalyses the reaction cutin + H2O = cutin monomers.. Its function is as follows. Catalyzes the hydrolysis of complex carboxylic polyesters found in the cell wall of plants. Degrades cutin, a macromolecule that forms the structure of the plant cuticle. The polypeptide is Probable cutinase 3 (Neosartorya fischeri (strain ATCC 1020 / DSM 3700 / CBS 544.65 / FGSC A1164 / JCM 1740 / NRRL 181 / WB 181) (Aspergillus fischerianus)).